The sequence spans 370 residues: MNKMNRKFSKLLKNPHIFFRDFLNKKYPIKNTELPFAESEEANLIEAHQKLDKIIQKNTLRQSDIDVVFTWVDGSDPLWQSKYHQYAPNYQANSALYATDIARFEDHNELYYSVHAVLKFMPWVRHIFIVTDNQKPKWLDEAYQEKITLISHQDIIDKEYLPTFNSHVIEAFLHKIPNLSENFIYFNDDVFIARELQAEHFFQANGIASIFMSEKSLTQMRDRGTITPTLSASEYSIRLLNKYYNTNIDSPLVHTYIPLKKSMYELAWQRYEKEILGFLPNKLRTNHDLNFANFLIPWLMYFEGKAMPKIDICYYFNIRSPNALTQYKKLLNKKNIGEQPNSFCANDFNSQKSINNYQNQLFSFLNSYYS.

Belongs to the stealth family.

Functionally, part of a capsular polysaccharide synthesis locus. This is Capsular polysaccharide phosphotransferase from Actinobacillus suis.